A 214-amino-acid chain; its full sequence is Ribosomal RNA small subunit methyltransferase G (214 aa).

S-adenosyl-L-methionine-binding positions include Gly58, 109–110 (AE), and Arg126.

This sequence belongs to the methyltransferase superfamily. RNA methyltransferase RsmG family.

Its subcellular location is the cytoplasm. In terms of biological role, specifically methylates the N7 position of a guanine in 16S rRNA. This is Ribosomal RNA small subunit methyltransferase G from Ureaplasma parvum serovar 3 (strain ATCC 700970).